A 750-amino-acid chain; its full sequence is Methylmalonyl-CoA mutase, mitochondrial (750 aa).

Residues 1 to 32 (MLRAKNQLFLLSPHYLRQVKESSGSRLIQQRL) constitute a mitochondrion transit peptide. A malonyl-CoA-binding site is contributed by glutamine 50. Position 89 is an N6-acetyllysine (lysine 89). Malonyl-CoA contacts are provided by residues 96–99 (YPTM) and 106–110 (TIRQY). Lysine 212 carries the N6-acetyllysine modification. Malonyl-CoA-binding positions include 216 to 218 (TIQ), arginine 228, lysine 255, histidine 265, and 304 to 306 (RLS). At lysine 335 the chain carries N6-acetyllysine. At lysine 343 the chain carries N6-succinyllysine. Serine 481 carries the post-translational modification Phosphoserine. Position 595 is an N6-succinyllysine (lysine 595). Lysine 602 carries the post-translational modification N6-acetyllysine. One can recognise a B12-binding domain in the interval 614–746 (RPRLLVAKMG…DDIEKCLEKK (133 aa)). An adenosylcob(III)alamin-binding site is contributed by histidine 627.

It belongs to the methylmalonyl-CoA mutase family. In terms of assembly, homodimer. Interacts (the apoenzyme form) with MMAA; the interaction is GTP dependent. The cofactor is adenosylcob(III)alamin.

The protein resides in the mitochondrion matrix. It is found in the mitochondrion. Its subcellular location is the cytoplasm. The enzyme catalyses (R)-methylmalonyl-CoA = succinyl-CoA. Its activity is regulated as follows. During catalysis, accumulation of oxidized inactive cofactor hydroxocobalamin (OH2Cbl) leads to loss of MMUT activity. Interaction with MMAA decreases the rate of OH2Cbl formation and promotes the replacement of OH2Cbl by the active cofactor adenosylcobalamin (AdoCbl), thereby restoring MMUT activity. Inhibited by itaconyl-CoA, a metabolite that inactivates the coenzyme B12 cofactor. Inhibited at high concentration of substrate. In terms of biological role, catalyzes the reversible isomerization of methylmalonyl-CoA (MMCoA) (generated from branched-chain amino acid metabolism and degradation of dietary odd chain fatty acids and cholesterol) to succinyl-CoA (3-carboxypropionyl-CoA), a key intermediate of the tricarboxylic acid cycle. This is Methylmalonyl-CoA mutase, mitochondrial from Homo sapiens (Human).